The chain runs to 194 residues: dCTP deaminase (194 aa).

DCTP contacts are provided by residues 110–115, Asp128, 136–138, Tyr171, Lys178, and Gln182; these read RSSLAR and VLE. Glu138 functions as the Proton donor/acceptor in the catalytic mechanism. Residues 173–194 are disordered; that stretch reads SRQDAKYKNQQSAVASRINQDR. The span at 180-194 shows a compositional bias: polar residues; the sequence is KNQQSAVASRINQDR.

The protein belongs to the dCTP deaminase family. Homotrimer.

It catalyses the reaction dCTP + H2O + H(+) = dUTP + NH4(+). Its pathway is pyrimidine metabolism; dUMP biosynthesis; dUMP from dCTP (dUTP route): step 1/2. Functionally, catalyzes the deamination of dCTP to dUTP. This chain is dCTP deaminase, found in Actinobacillus succinogenes (strain ATCC 55618 / DSM 22257 / CCUG 43843 / 130Z).